Here is an 866-residue protein sequence, read N- to C-terminus: MAPTVLMVAEKPSIALSIASALSGGRMSTRKGSTDVHEFDGMFQGSHAFFKVTSVIGHVLSVDFPPAYQNWEGTDPMDLFVAPVLRSECNPKAHIRRHLAQEARGCTYLVLWLDCDREGENICYEVIDCTGIPKSEVGRRIFRAKFSSVTEKDIMDAMNNLVLPSKDEALAVDARQEIDLKVGVAFTRFQTRYFQGKYGNLDSRVISYGPCQTPTLGFCVQRYQQITTFKPEKFWSLKTYVIKDGNEIQLEWDRKKLFDFDVTVMFQKMVASDGILKVTDISVKEECKARPPGLNTVNLLKVASSALGIGPQTAMHLAERLYTQGFISYPRTESTAYPSSFDFRSALAALAHNPLWSNDVRTLLDTGFVKPKQGHDAGDHPPITPMRLATEEALGTDAWRLYQYICQHFIGTVSPDCRYTRTSIEFTSGGETFHCVGNRVTSKGFTSIMPWLAVSENNIPAYKKGDAVSIHKVDIYEGSTTPPDYLSESELISLMEKNGIGTDASIPVHVNNICERNYVQVNSGRRLVPTPLGTTLIRGYQCIDADLCLPDIRRFIEQQITLIAKGEADHLQVVQHVLQQFMKKYSYFVKKIENMDALFEAQFSPLADSGRLLSKCGKCARYMKYISTQPMRLYCVTCEEVYYLPQNGSIKLYKEIICPLDGFELLLFSMVGPDAKSFPLCPFCYNSPPFEGIDKLFGALKLDDTGKVGKGAGMPCFLCLHPTCKQSMITQGVCACPECTGTLILDPVSAPKWRLYCNRCNCIVLLPHAAHKISTTDKKCPTCESTIIEVDFNKKTTPLKDGATLHEGCILCDELLHSLIEMKHGKSFFMRRGRGRGRGRGRGRGSSRGRRGSSRHDDPKMSFRDF.

The 146-residue stretch at 4–149 folds into the Toprim domain; the sequence is TVLMVAEKPS…RIFRAKFSSV (146 aa). 3 residues coordinate Mg(2+): Glu-10, Asp-114, and Asp-116. The 421-residue stretch at 165–585 folds into the Topo IA-type catalytic domain; the sequence is SKDEALAVDA…HVLQQFMKKY (421 aa). An interaction with DNA region spans residues 207-212; the sequence is SYGPCQ. The active-site O-(5'-phospho-DNA)-tyrosine intermediate is Tyr-329. Residues 830 to 853 are compositionally biased toward basic residues; it reads MRRGRGRGRGRGRGRGSSRGRRGS. Positions 830–866 are disordered; that stretch reads MRRGRGRGRGRGRGRGSSRGRRGSSRHDDPKMSFRDF. Basic and acidic residues predominate over residues 854-866; the sequence is SRHDDPKMSFRDF.

It belongs to the type IA topoisomerase family. The cofactor is Mg(2+).

The catalysed reaction is ATP-independent breakage of single-stranded DNA, followed by passage and rejoining.. Releases the supercoiling and torsional tension of DNA introduced during the DNA replication and transcription by transiently cleaving and rejoining one strand of the DNA duplex. Introduces a single-strand break via transesterification at a target site in duplex DNA. The scissile phosphodiester is attacked by the catalytic tyrosine of the enzyme, resulting in the formation of a DNA-(5'-phosphotyrosyl)-enzyme intermediate and the expulsion of a 3'-OH DNA strand. The free DNA strand than undergoes passage around the unbroken strand thus removing DNA supercoils. Finally, in the religation step, the DNA 3'-OH attacks the covalent intermediate to expel the active-site tyrosine and restore the DNA phosphodiester backbone. This chain is DNA topoisomerase 3-beta (TOP3B), found in Oryza sativa subsp. japonica (Rice).